We begin with the raw amino-acid sequence, 68 residues long: Pleurocidin (68 aa).

An N-terminal signal peptide occupies residues Met-1–Cys-22. A propeptide spanning residues Gly-48–Glu-68 is cleaved from the precursor.

This sequence belongs to the pleurocidin family. In terms of tissue distribution, goblet cells.

The protein resides in the secreted. Its subcellular location is the membrane. Antimicrobial peptide with potent activity against Gram-positive and Gram-negative bacteria. Activity against E.coli and B.subtilis. Weaker activity against L.mucor, s.marcescens and P.aeruginosa. May play a role in innate host defense. The protein is Pleurocidin (ple1) of Pseudopleuronectes americanus (Winter flounder).